Consider the following 305-residue polypeptide: Tyrosine recombinase XerD (305 aa).

The Core-binding (CB) domain occupies 1 to 83 (MEFISQFLEM…TIKSYYEFLI (83 aa)). One can recognise a Tyr recombinase domain in the interval 104–298 (KLPEILSIDD…QTNHLKKALL (195 aa)). Catalysis depends on residues Arg145, Lys175, His250, Arg253, and His276. Catalysis depends on Tyr285, which acts as the O-(3'-phospho-DNA)-tyrosine intermediate.

The protein belongs to the 'phage' integrase family. XerD subfamily. Forms a cyclic heterotetrameric complex composed of two molecules of XerC and two molecules of XerD.

It localises to the cytoplasm. Site-specific tyrosine recombinase, which acts by catalyzing the cutting and rejoining of the recombining DNA molecules. The XerC-XerD complex is essential to convert dimers of the bacterial chromosome into monomers to permit their segregation at cell division. It also contributes to the segregational stability of plasmids. This chain is Tyrosine recombinase XerD, found in Rickettsia bellii (strain RML369-C).